Reading from the N-terminus, the 352-residue chain is MDFSVSDNLDDPIEGVSDFSPTSWENGGYLDKVEPEIDKHGSMIPKYKIYTPGANERKFNNYMYMICYGFVEDVERSPESGKRKKIRTIAAYPLGVGKSTSHPQDLLEELCSLKVTVRRTAGATEKIVFGSSGPLHHLLPWKKILTGGSIFNAVKVCRNVDQIQLENQQSLRIFFLSITKLNDSGIYMIPRTMLEFRRNNAIAFNLLVYLKIDADLAKAGIQGSFDKDGTKVASFMLHLGNFVRRAGKYYSVEYCKRKIDRMKLQFSLGSIGGLSLHIKINGVISKRLFAQMGFQKNLCFSLMDINPWLNRLTWNNSCEISRVAAVLQPSVPREFMIYDDVFIDNTGKILKG.

The interval Met-1–Ser-20 is disordered.

This sequence belongs to the morbillivirus/respirovirus/rubulavirus M protein family. In terms of assembly, homomultimer. Interacts with host ANP32B; this interaction promotes M nuclear localization.

Its subcellular location is the virion. It is found in the host cytoplasm. The protein localises to the host nucleus. In terms of biological role, plays a crucial role in virion assembly and budding. Forms a shell at the inner face of the plasma membrane. This Hendra virus (isolate Horse/Autralia/Hendra/1994) protein is Matrix protein (M).